Here is a 511-residue protein sequence, read N- to C-terminus: Spermatogenesis-associated protein 2 (511 aa).

Residues 77–149 (ALHCAFSMLE…AYKLKELVES (73 aa)) form the PUB domain. The PIM motif motif lies at 320-337 (TYFPTQDDVDLYTDSEPR).

Belongs to the SPATA2 family. Interacts (via the PIM motif) with RNF31/HOIP (via the PUB domain); the interaction is direct. Interacts (via the PUB domain) with CYLD; the interaction is direct. Expressed in the testis and to a lesser extent in the brain, while skeletal muscle and kidney show weak expression.

The protein localises to the cytoplasm. It localises to the nucleus. Bridging factor that mediates the recruitment of CYLD to the LUBAC complex, thereby regulating TNF-alpha-induced necroptosis. Acts as a direct binding intermediate that bridges RNF31/HOIP, the catalytic subunit of the LUBAC complex, and the deubiquitinase (CYLD), thereby recruiting CYLD to the TNF-R1 signaling complex (TNF-RSC). Required to activate the 'Met-1'- (linear) and 'Lys-63'-linked deubiquitinase activities of CYLD. Controls the kinase activity of RIPK1 and TNF-alpha-induced necroptosis by promoting 'Met-1'-linked deubiquitination of RIPK1 by CYLD. The protein is Spermatogenesis-associated protein 2 of Rattus norvegicus (Rat).